The following is a 129-amino-acid chain: Glycine cleavage system H protein (129 aa).

Positions Leu-24–Arg-106 constitute a Lipoyl-binding domain. Lys-65 is modified (N6-lipoyllysine).

Belongs to the GcvH family. In terms of assembly, the glycine cleavage system is composed of four proteins: P, T, L and H. (R)-lipoate is required as a cofactor.

Functionally, the glycine cleavage system catalyzes the degradation of glycine. The H protein shuttles the methylamine group of glycine from the P protein to the T protein. In Synechococcus sp. (strain CC9605), this protein is Glycine cleavage system H protein.